Here is a 491-residue protein sequence, read N- to C-terminus: Probable CtpA-like serine protease (491 aa).

The tract at residues 1–22 (MNDHQKNHATSQDDNTKSTPSK) is disordered. Over residues 8–22 (HATSQDDNTKSTPSK) the composition is skewed to polar residues. Residues 31 to 51 (LWHFILVILGIILLTSIITVV) form a helical membrane-spanning segment. The 83-residue stretch at 119-201 (TKQFNEGVSG…TYVTLTIKRG (83 aa)) folds into the PDZ domain. Active-site charge relay system residues include Ser-324, Asp-335, and Lys-349.

This sequence belongs to the peptidase S41A family.

It localises to the cell membrane. This chain is Probable CtpA-like serine protease, found in Staphylococcus epidermidis (strain ATCC 12228 / FDA PCI 1200).